The primary structure comprises 330 residues: Putative UV-damage endonuclease (330 aa).

It belongs to the uve1/UvsE family.

The protein localises to the virion. Its function is as follows. Endonuclease for the repair of UV-irradiated DNA. The chain is Putative UV-damage endonuclease from Acanthamoeba polyphaga mimivirus (APMV).